Consider the following 254-residue polypeptide: Alcohol dehydrogenase (254 aa).

Residue 10–33 participates in NAD(+) binding; it reads FVAGLGGIGLDTSRELVKRDLKNL. Ser138 contributes to the substrate binding site. The active-site Proton acceptor is the Tyr151.

Belongs to the short-chain dehydrogenases/reductases (SDR) family. In terms of assembly, homodimer.

It catalyses the reaction a primary alcohol + NAD(+) = an aldehyde + NADH + H(+). The catalysed reaction is a secondary alcohol + NAD(+) = a ketone + NADH + H(+). This chain is Alcohol dehydrogenase (Adh), found in Drosophila subobscura (Fruit fly).